The chain runs to 187 residues: Plasmodium-specific hydrophobic abundant protein (187 aa).

The N-terminal stretch at 1–18 (MMKYVFVALCLFAVVALA) is a signal peptide.

The protein to HAP-S protein.

Its subcellular location is the membrane. The protein is Plasmodium-specific hydrophobic abundant protein of Physarum polycephalum (Slime mold).